We begin with the raw amino-acid sequence, 444 residues long: ATP-dependent protease ATPase subunit HslU (444 aa).

Residues valine 18, 60–65 (GVGKTE), aspartate 258, glutamate 323, and arginine 395 each bind ATP.

This sequence belongs to the ClpX chaperone family. HslU subfamily. As to quaternary structure, a double ring-shaped homohexamer of HslV is capped on each side by a ring-shaped HslU homohexamer. The assembly of the HslU/HslV complex is dependent on binding of ATP.

It localises to the cytoplasm. Functionally, ATPase subunit of a proteasome-like degradation complex; this subunit has chaperone activity. The binding of ATP and its subsequent hydrolysis by HslU are essential for unfolding of protein substrates subsequently hydrolyzed by HslV. HslU recognizes the N-terminal part of its protein substrates and unfolds these before they are guided to HslV for hydrolysis. This Thioalkalivibrio sulfidiphilus (strain HL-EbGR7) protein is ATP-dependent protease ATPase subunit HslU.